Here is a 59-residue protein sequence, read N- to C-terminus: Large ribosomal subunit protein bL32 (59 aa).

It belongs to the bacterial ribosomal protein bL32 family. As to quaternary structure, part of the 50S ribosomal subunit.

The polypeptide is Large ribosomal subunit protein bL32 (rpmF) (Bacillus subtilis (strain 168)).